Reading from the N-terminus, the 704-residue chain is Elongation factor G (704 aa).

Positions 8–291 constitute a tr-type G domain; that stretch reads DRVRNIGIMA…AVIDYLASPV (284 aa). Residues 17 to 24, 90 to 94, and 144 to 147 each bind GTP; these read AHIDAGKT, DTPGH, and NKMD.

The protein belongs to the TRAFAC class translation factor GTPase superfamily. Classic translation factor GTPase family. EF-G/EF-2 subfamily.

It is found in the cytoplasm. In terms of biological role, catalyzes the GTP-dependent ribosomal translocation step during translation elongation. During this step, the ribosome changes from the pre-translocational (PRE) to the post-translocational (POST) state as the newly formed A-site-bound peptidyl-tRNA and P-site-bound deacylated tRNA move to the P and E sites, respectively. Catalyzes the coordinated movement of the two tRNA molecules, the mRNA and conformational changes in the ribosome. The protein is Elongation factor G of Chlorobaculum tepidum (strain ATCC 49652 / DSM 12025 / NBRC 103806 / TLS) (Chlorobium tepidum).